We begin with the raw amino-acid sequence, 122 residues long: UPF0102 protein VCM66_0538 (122 aa).

It belongs to the UPF0102 family.

This chain is UPF0102 protein VCM66_0538, found in Vibrio cholerae serotype O1 (strain M66-2).